A 503-amino-acid chain; its full sequence is Probable apyrase 4 (503 aa).

Residues 1–14 (MQRSNARSRSNINS) show a composition bias toward low complexity. Positions 1–39 (MQRSNARSRSNINSDMVDPPEVQTSPGNHRSSPSTAAKP) are disordered. The Cytoplasmic portion of the chain corresponds to 1–45 (MQRSNARSRSNINSDMVDPPEVQTSPGNHRSSPSTAAKPKSKRTK). Residues 46-66 (SIIFVIVACVTIALGLLFIGY) form a helical; Signal-anchor for type II membrane protein membrane-spanning segment. Residues 67-503 (SILRSGRNRR…DLSNVAKYKI (437 aa)) are Extracellular-facing. Position 83-93 (83-93 (VIIDGGSSGTR)) interacts with ATP. Glu206 acts as the Proton acceptor in catalysis. 230–240 (GIVELGGASAQ) lines the ATP pocket. N-linked (GlcNAc...) asparagine glycosylation is found at Asn261, Asn293, and Asn338.

Belongs to the GDA1/CD39 NTPase family. It depends on Ca(2+) as a cofactor. As to expression, expressed both in the primary root and lateral root but not in the rosette leaves.

It is found in the membrane. It catalyses the reaction a ribonucleoside 5'-triphosphate + 2 H2O = a ribonucleoside 5'-phosphate + 2 phosphate + 2 H(+). In terms of biological role, catalyzes the hydrolysis of phosphoanhydride bonds of nucleoside tri- and di-phosphates. In Arabidopsis thaliana (Mouse-ear cress), this protein is Probable apyrase 4 (APY4).